A 951-amino-acid polypeptide reads, in one-letter code: Protein translocase subunit SecA 1 (951 aa).

ATP is bound by residues Q87, 105-109, and D525; that span reads GEGKT. Positions 911–942 are disordered; that stretch reads PVVSADRSSRDPGNPASWGKVGRNEDCPCGSG. The Zn(2+) site is built by C937, C939, C948, and H949.

The protein belongs to the SecA family. In terms of assembly, monomer and homodimer. Part of the essential Sec protein translocation apparatus which comprises SecA, SecYEG and auxiliary proteins SecDF-YajC and YidC. It depends on Zn(2+) as a cofactor.

The protein resides in the cell inner membrane. It is found in the cytoplasm. It catalyses the reaction ATP + H2O + cellular proteinSide 1 = ADP + phosphate + cellular proteinSide 2.. Its function is as follows. Part of the Sec protein translocase complex. Interacts with the SecYEG preprotein conducting channel. Has a central role in coupling the hydrolysis of ATP to the transfer of proteins into and across the cell membrane, serving both as a receptor for the preprotein-SecB complex and as an ATP-driven molecular motor driving the stepwise translocation of polypeptide chains across the membrane. The protein is Protein translocase subunit SecA 1 of Nitrobacter hamburgensis (strain DSM 10229 / NCIMB 13809 / X14).